Here is a 484-residue protein sequence, read N- to C-terminus: Probable UDP-N-acetylglucosamine pyrophosphorylase (484 aa).

The Substrate binding motif lies at 107 to 110; it reads LAGG. UTP-binding positions include 107–110, Lys121, Gln200, and Gly226; that span reads LAGG. Asn227 provides a ligand contact to substrate. UTP is bound at residue Asp255. The Substrate binding signature appears at 304-305; sequence EY. Lys377 contributes to the UTP binding site. Residue Lys407 coordinates substrate.

Belongs to the UDPGP type 1 family.

Its subcellular location is the cytoplasm. The catalysed reaction is N-acetyl-alpha-D-glucosamine 1-phosphate + UTP + H(+) = UDP-N-acetyl-alpha-D-glucosamine + diphosphate. It participates in nucleotide-sugar biosynthesis; UDP-N-acetyl-alpha-D-glucosamine biosynthesis; UDP-N-acetyl-alpha-D-glucosamine from N-acetyl-alpha-D-glucosamine 1-phosphate: step 1/1. The sequence is that of Probable UDP-N-acetylglucosamine pyrophosphorylase from Caenorhabditis elegans.